The chain runs to 330 residues: DNA-directed RNA polymerase subunit alpha (330 aa).

Residues 1–235 (MQGSVTEFLK…EQLEAFVDLR (235 aa)) form an alpha N-terminal domain (alpha-NTD) region. Residues 249 to 330 (FDPILLRPVD…WPPASIADNE (82 aa)) are alpha C-terminal domain (alpha-CTD).

Belongs to the RNA polymerase alpha chain family. Homodimer. The RNAP catalytic core consists of 2 alpha, 1 beta, 1 beta' and 1 omega subunit. When a sigma factor is associated with the core the holoenzyme is formed, which can initiate transcription.

It carries out the reaction RNA(n) + a ribonucleoside 5'-triphosphate = RNA(n+1) + diphosphate. In terms of biological role, DNA-dependent RNA polymerase catalyzes the transcription of DNA into RNA using the four ribonucleoside triphosphates as substrates. The sequence is that of DNA-directed RNA polymerase subunit alpha from Yersinia enterocolitica serotype O:8 / biotype 1B (strain NCTC 13174 / 8081).